We begin with the raw amino-acid sequence, 119 residues long: uncharacterized protein (119 aa).

Residues 1–18 (MPAVFMLASSSALQCGRG) form the signal peptide. The tract at residues 23 to 100 (PRTEVGAGHS…MFPGPLRGPA (78 aa)) is disordered. Polar residues predominate over residues 43–71 (GNQTSVIPATSRQAALGTSWTQRRTQPLQ). Asn-44 carries an N-linked (GlcNAc...) asparagine glycan.

The protein resides in the secreted. This is an uncharacterized protein from Homo sapiens (Human).